Here is a 332-residue protein sequence, read N- to C-terminus: Phosphate acetyltransferase (332 aa).

The protein belongs to the phosphate acetyltransferase and butyryltransferase family.

It is found in the cytoplasm. The catalysed reaction is acetyl-CoA + phosphate = acetyl phosphate + CoA. The protein operates within metabolic intermediate biosynthesis; acetyl-CoA biosynthesis; acetyl-CoA from acetate: step 2/2. The chain is Phosphate acetyltransferase (pta) from Acetivibrio thermocellus (strain ATCC 27405 / DSM 1237 / JCM 9322 / NBRC 103400 / NCIMB 10682 / NRRL B-4536 / VPI 7372) (Clostridium thermocellum).